A 462-amino-acid polypeptide reads, in one-letter code: MSGGLVTAAYIVAAILFIFSLAGLSKHETSRQGNNFGIAGMAIALIATIFGPDTGNVGWILLAMVIGGAIGIRLAKKVEMTEMPELVAILHSFVGLAAVLVGFNSYLHHDAGMAPILVNIHLTEVFLGIFIGAVTFTGSVVAFGKLCGKISSKPLMLPNRHKMNLAALVVSFLLLIVFVRTDSVGLQVLALLIMTAIALVFGWHLVASIGGADMPVVVSMLNSYSGWAAAAAGFMLSNDLLIVTGALVGSSGAILSYIMCKAMNRSFISVIAGGFGTDGSSTGDDQEVGEHREITAEETAELLKNSHSVIITPGYGMAVAQAQYPVAEITEKLRARGINVRFGIHPVAGRLPGHMNVLLAEAKVPYDIVLEMDEINDDFADTDTVLVIGANDTVNPAAQDDPKSPIAGMPVLEVWKAQNVIVFKRSMNTGYAGVQNPLFFKENTHMLFGDAKASVDAILKAL.

The Periplasmic portion of the chain corresponds to 1 to 3 (MSG). Residues 4-24 (GLVTAAYIVAAILFIFSLAGL) traverse the membrane as a helical segment. Topologically, residues 25 to 45 (SKHETSRQGNNFGIAGMAIAL) are cytoplasmic. A helical membrane pass occupies residues 46–66 (IATIFGPDTGNVGWILLAMVI). The Periplasmic segment spans residues 67–82 (GGAIGIRLAKKVEMTE). The chain crosses the membrane as a helical span at residues 83–103 (MPELVAILHSFVGLAAVLVGF). Topologically, residues 104 to 115 (NSYLHHDAGMAP) are cytoplasmic. Residues 116–136 (ILVNIHLTEVFLGIFIGAVTF) traverse the membrane as a helical segment. At 137–164 (TGSVVAFGKLCGKISSKPLMLPNRHKMN) the chain is on the periplasmic side. A helical transmembrane segment spans residues 165–185 (LAALVVSFLLLIVFVRTDSVG). Residues 186 to 188 (LQV) lie on the Cytoplasmic side of the membrane. Residues 189–209 (LALLIMTAIALVFGWHLVASI) traverse the membrane as a helical segment. The Periplasmic portion of the chain corresponds to 210-215 (GGADMP). The chain crosses the membrane as a helical span at residues 216–236 (VVVSMLNSYSGWAAAAAGFML). The Cytoplasmic segment spans residues 237-239 (SND). Residues 240–260 (LLIVTGALVGSSGAILSYIMC) form a helical membrane-spanning segment. Residues 261 to 308 (KAMNRSFISVIAGGFGTDGSSTGDDQEVGEHREITAEETAELLKNSHS) are Periplasmic-facing. A helical membrane pass occupies residues 309-329 (VIITPGYGMAVAQAQYPVAEI). Topologically, residues 330–462 (TEKLRARGIN…ASVDAILKAL (133 aa)) are cytoplasmic.

Belongs to the PNT beta subunit family. Heterodimer of an alpha and a beta chain.

The protein resides in the cell inner membrane. It catalyses the reaction NAD(+) + NADPH + H(+)(in) = NADH + NADP(+) + H(+)(out). Its function is as follows. The transhydrogenation between NADH and NADP is coupled to respiration and ATP hydrolysis and functions as a proton pump across the membrane. This is NAD(P) transhydrogenase subunit beta (pntB) from Escherichia coli O157:H7.